A 250-amino-acid polypeptide reads, in one-letter code: Ribonuclease HII (250 aa).

One can recognise an RNase H type-2 domain in the interval 66-250 (QLVAGVDEVG…SFAPVSEYEK (185 aa)). Residues Asp-72, Glu-73, and Asp-164 each coordinate a divalent metal cation.

It belongs to the RNase HII family. It depends on Mn(2+) as a cofactor. Requires Mg(2+) as cofactor.

The protein localises to the cytoplasm. The enzyme catalyses Endonucleolytic cleavage to 5'-phosphomonoester.. Its function is as follows. Endonuclease that specifically degrades the RNA of RNA-DNA hybrids. The polypeptide is Ribonuclease HII (Lactobacillus gasseri (strain ATCC 33323 / DSM 20243 / BCRC 14619 / CIP 102991 / JCM 1131 / KCTC 3163 / NCIMB 11718 / NCTC 13722 / AM63)).